A 1008-amino-acid chain; its full sequence is Retinoblastoma-related protein (1008 aa).

Residues 375–394 (KRKVDSMTSPTKTITSPLSP) form a disordered region. The segment covering 380–392 (SMTSPTKTITSPL) has biased composition (polar residues). A domain A region spans residues 404–605 (TPVSTAMTTA…EKGSSMYNSL (202 aa)). Residues 404-853 (TPVSTAMTTA…NEVFIPSVKP (450 aa)) are pocket. Positions 606 to 722 (TIARPNLSNE…HPTRGETCGE (117 aa)) are spacer. Residues 723–853 (TAVNLFFSKI…NEVFIPSVKP (131 aa)) form a domain B region. Disordered regions lie at residues 865–899 (KNPN…SLPD) and 988–1008 (LQNG…LKTE).

Belongs to the retinoblastoma protein (RB) family.

It is found in the nucleus. Functionally, regulator of biological processes that recruits a histone deacetylase to control gene transcription. May play a role in the entry into mitosis, negatively regulating the cell proliferation. Formation of stable complexes with geminiviridae replication-associated proteins may create a cellular environment which favors viral DNA replication. In Pilosella officinarum (Mouse-ear hawkweed), this protein is Retinoblastoma-related protein (RBR).